Consider the following 384-residue polypeptide: Probable UDP-galactopyranose mutase (384 aa).

The signal sequence occupies residues 1–19; that stretch reads MNNKNIMIVGAGFSGVVIA. FAD is bound by residues S14, 33-34, N41, and 60-61; these read DR and HI. UDP-alpha-D-galactose is bound by residues N84, F151, T156, W160, and Y185. Position 219 (F219) interacts with FAD. Residues N270, R280, and Y314 each coordinate UDP-alpha-D-galactose. An FAD-binding site is contributed by R343. Y349 contacts UDP-alpha-D-galactose. Position 350–355 (350–355) interacts with FAD; it reads LDMDVT.

It belongs to the UDP-galactopyranose/dTDP-fucopyranose mutase family. As to quaternary structure, homodimer. FAD is required as a cofactor.

The catalysed reaction is UDP-alpha-D-galactose = UDP-alpha-D-galactofuranose. The protein operates within bacterial outer membrane biogenesis; LPS O-antigen biosynthesis. Functionally, catalyzes the interconversion through a 2-keto intermediate of uridine diphosphogalactopyranose (UDP-GalP) into uridine diphosphogalactofuranose (UDP-GalF). The sequence is that of Probable UDP-galactopyranose mutase (rfbD) from Klebsiella pneumoniae.